The following is a 360-amino-acid chain: Phospho-N-acetylmuramoyl-pentapeptide-transferase (360 aa).

The next 10 helical transmembrane spans lie at 27-47 (ILGVLTALAISLLVGNKVIVL), 73-93 (TMGGALIIFSISVSTLLWGDL), 97-117 (YVWVVLLVMLAFGVVGWVDDY), 145-165 (AFYLYYTASTPAETALIVPLF), 168-188 (VAIPLGMFFIVLTYFVIVGTS), 199-219 (GLAILPTVLVGGALGVFAYLT), 236-256 (SGELLVFCAALAGAGLGFLWF), 263-283 (IFMGDVGSLALGAALGTIAVI), 288-308 (LVLFIMGGVFVMETVSVILQV), and 337-357 (KVIVRFWIITVCLVLVGFATL).

The protein belongs to the glycosyltransferase 4 family. MraY subfamily. It depends on Mg(2+) as a cofactor.

The protein resides in the cell inner membrane. It catalyses the reaction UDP-N-acetyl-alpha-D-muramoyl-L-alanyl-gamma-D-glutamyl-meso-2,6-diaminopimeloyl-D-alanyl-D-alanine + di-trans,octa-cis-undecaprenyl phosphate = di-trans,octa-cis-undecaprenyl diphospho-N-acetyl-alpha-D-muramoyl-L-alanyl-D-glutamyl-meso-2,6-diaminopimeloyl-D-alanyl-D-alanine + UMP. Its pathway is cell wall biogenesis; peptidoglycan biosynthesis. Its function is as follows. Catalyzes the initial step of the lipid cycle reactions in the biosynthesis of the cell wall peptidoglycan: transfers peptidoglycan precursor phospho-MurNAc-pentapeptide from UDP-MurNAc-pentapeptide onto the lipid carrier undecaprenyl phosphate, yielding undecaprenyl-pyrophosphoryl-MurNAc-pentapeptide, known as lipid I. This chain is Phospho-N-acetylmuramoyl-pentapeptide-transferase, found in Marinomonas sp. (strain MWYL1).